Here is a 37-residue protein sequence, read N- to C-terminus: Large ribosomal subunit protein bL36 (37 aa).

Belongs to the bacterial ribosomal protein bL36 family.

This Staphylococcus epidermidis (strain ATCC 35984 / DSM 28319 / BCRC 17069 / CCUG 31568 / BM 3577 / RP62A) protein is Large ribosomal subunit protein bL36.